A 65-amino-acid chain; its full sequence is Small ribosomal subunit protein bS21 (65 aa).

The protein belongs to the bacterial ribosomal protein bS21 family.

The chain is Small ribosomal subunit protein bS21 from Aster yellows phytoplasma.